A 243-amino-acid polypeptide reads, in one-letter code: ATP-dependent dethiobiotin synthetase BioD (243 aa).

12–17 (DVGKTL) is an ATP binding site. T16 contacts Mg(2+). K37 is an active-site residue. S41 is a substrate binding site. Residues D54, 115-118 (EGCG), and 179-180 (NM) contribute to the ATP site. D54 and E115 together coordinate Mg(2+).

The protein belongs to the dethiobiotin synthetase family. Homodimer. Mg(2+) serves as cofactor.

It localises to the cytoplasm. It carries out the reaction (7R,8S)-7,8-diammoniononanoate + CO2 + ATP = (4R,5S)-dethiobiotin + ADP + phosphate + 3 H(+). Its pathway is cofactor biosynthesis; biotin biosynthesis; biotin from 7,8-diaminononanoate: step 1/2. Catalyzes a mechanistically unusual reaction, the ATP-dependent insertion of CO2 between the N7 and N8 nitrogen atoms of 7,8-diaminopelargonic acid (DAPA, also called 7,8-diammoniononanoate) to form a ureido ring. The chain is ATP-dependent dethiobiotin synthetase BioD from Caldicellulosiruptor saccharolyticus (strain ATCC 43494 / DSM 8903 / Tp8T 6331).